A 365-amino-acid polypeptide reads, in one-letter code: NADH-quinone oxidoreductase subunit 8 (365 aa).

A run of 9 helical transmembrane segments spans residues 11-31, 80-100, 120-140, 157-177, 192-212, 252-272, 273-293, 310-330, and 336-356; these read WMVA…FAFM, FLFV…FGLI, LGIL…FLSG, ASLI…VLLV, HGWL…ASMA, FITA…MPVL, EVPY…FIWI, WGFL…VVAL, and YLLY…LYTP.

Belongs to the complex I subunit 1 family. NDH-1 is composed of 15 different subunits, Nqo1 to Nqo15. The complex has a L-shaped structure, with the hydrophobic arm (subunits Nqo7, Nqo8 and Nqo10 to Nqo14) embedded in the membrane and the hydrophilic peripheral arm (subunits Nqo1 to Nqo6, Nqo9 and Nqo15) protruding into the bacterial cytoplasm. The hydrophilic domain contains all the redox centers.

Its subcellular location is the cell inner membrane. The enzyme catalyses a quinone + NADH + 5 H(+)(in) = a quinol + NAD(+) + 4 H(+)(out). In terms of biological role, NDH-1 shuttles electrons from NADH, via FMN and iron-sulfur (Fe-S) centers, to quinones in the respiratory chain. The immediate electron acceptor for the enzyme in this species is menaquinone. Couples the redox reaction to proton translocation (for every two electrons transferred, four hydrogen ions are translocated across the cytoplasmic membrane), and thus conserves the redox energy in a proton gradient required for the synthesis of ATP. In Thermus thermophilus (strain ATCC 27634 / DSM 579 / HB8), this protein is NADH-quinone oxidoreductase subunit 8 (nqo8).